The following is a 452-amino-acid chain: MSTTFPGLVHDAEIRHDGSNSYRLMQLGCLESVANSTVAYSSSSPLTYSTTGTEFASPYFSTNHQYTPLHHQSFHYEFQHSHPAVTPDAYSLNSLHHSQQYYQQIHHGEPTDFINLHNARALKSSCLDEQRRELGCLDAYRRHDLSLMSHGSQYGMHPDQRLLPGPSLGLAAAGADDLQGSVEAQCGLVLNGQGGVIRRGGTCVVNPTDLFCSVPGRLSLLSSTSKYKVTIAEVKRRLSPPECLNASLLGGILRRAKSKNGGRCLREKLDRLGLNLPAGRRKAANVTLLTSLVEGEALHLARDFGYTCETEFPAKAVGEHLARQHMEQKEQTARKKMILATKQICKEFQDLLSQDRSPLGSSRPTPILDLDIQRHLTHFSLITHGFGTPAICAALSTFQTVLSEMLNYLEKHTTHKNGGAADSGQGHANSEKAPLRKTSEAAVKEGKTEKTD.

Ser239 carries the post-translational modification Phosphoserine; by PKA. The interval 280 to 410 is H-S-H (helix-span-helix), dimerization; it reads RRKAANVTLL…VLSEMLNYLE (131 aa). Residues 416–452 form a disordered region; that stretch reads KNGGAADSGQGHANSEKAPLRKTSEAAVKEGKTEKTD. Basic and acidic residues predominate over residues 429-452; the sequence is NSEKAPLRKTSEAAVKEGKTEKTD.

It belongs to the AP-2 family. In terms of assembly, binds DNA as a dimer. Can form homodimers or heterodimers with other AP-2 family members. As to expression, highly expressed in brain, placenta, skeletal muscle, thymus, small intestine, and prostate, and expressed at lower levels in leukocyte, spleen, testis, ovary and colon. Barely detectable in heart, kidney, liver, lung or pancreas.

It localises to the nucleus. Sequence-specific DNA-binding protein that interacts with inducible viral and cellular enhancer elements to regulate transcription of selected genes. AP-2 factors bind to the consensus sequence 5'-GCCNNNGGC-3' and activate genes involved in a large spectrum of important biological functions including proper eye, face, body wall, limb and neural tube development. They also suppress a number of genes including MCAM/MUC18, C/EBP alpha and MYC. The chain is Transcription factor AP-2-delta from Homo sapiens (Human).